Consider the following 815-residue polypeptide: uncharacterized protein (815 aa).

A DNA-binding region (zn(2)-C6 fungal-type) is located at residues 31–57 (CDMCRRKKIKCDGLRPCKNCKAGKLEC). A helical transmembrane segment spans residues 560–580 (YWTTVYCGFSTIVTLIFAALL). 2 disordered regions span residues 646 to 668 (ESNV…SNTQ) and 769 to 792 (DPDV…FNPT). A compositionally biased stretch (polar residues) spans 780–792 (SSSLNNSTPFNPT).

It localises to the cytoplasm. The protein resides in the nucleus membrane. This is an uncharacterized protein from Schizosaccharomyces pombe (strain 972 / ATCC 24843) (Fission yeast).